Here is a 405-residue protein sequence, read N- to C-terminus: L-carnitine CoA-transferase (405 aa).

Lys97 and Arg104 together coordinate CoA. Asp169 acts as the Nucleophile in catalysis.

This sequence belongs to the CoA-transferase III family. CaiB subfamily. In terms of assembly, homodimer.

Its subcellular location is the cytoplasm. It carries out the reaction crotonobetainyl-CoA + (R)-carnitine = crotonobetaine + (R)-carnitinyl-CoA. The enzyme catalyses 4-(trimethylamino)butanoyl-CoA + (R)-carnitine = (R)-carnitinyl-CoA + 4-(trimethylamino)butanoate. Its pathway is amine and polyamine metabolism; carnitine metabolism. Functionally, catalyzes the reversible transfer of the CoA moiety from gamma-butyrobetainyl-CoA to L-carnitine to generate L-carnitinyl-CoA and gamma-butyrobetaine. Is also able to catalyze the reversible transfer of the CoA moiety from gamma-butyrobetainyl-CoA or L-carnitinyl-CoA to crotonobetaine to generate crotonobetainyl-CoA. The protein is L-carnitine CoA-transferase of Escherichia fergusonii (strain ATCC 35469 / DSM 13698 / CCUG 18766 / IAM 14443 / JCM 21226 / LMG 7866 / NBRC 102419 / NCTC 12128 / CDC 0568-73).